The sequence spans 261 residues: uncharacterized protein (261 aa).

An ABC transporter domain is found at 1–236; that stretch reads MEIKEITIIG…SRKINEVDNW (236 aa). 36–43 contributes to the ATP binding site; it reads GPTGSGKS.

This sequence belongs to the ABC transporter superfamily.

This is an uncharacterized protein from Methanocaldococcus jannaschii (strain ATCC 43067 / DSM 2661 / JAL-1 / JCM 10045 / NBRC 100440) (Methanococcus jannaschii).